A 432-amino-acid polypeptide reads, in one-letter code: Glutamate-1-semialdehyde 2,1-aminomutase (432 aa).

Lys271 carries the post-translational modification N6-(pyridoxal phosphate)lysine.

The protein belongs to the class-III pyridoxal-phosphate-dependent aminotransferase family. HemL subfamily. As to quaternary structure, homodimer. Pyridoxal 5'-phosphate is required as a cofactor.

It is found in the cytoplasm. The catalysed reaction is (S)-4-amino-5-oxopentanoate = 5-aminolevulinate. Its pathway is porphyrin-containing compound metabolism; protoporphyrin-IX biosynthesis; 5-aminolevulinate from L-glutamyl-tRNA(Glu): step 2/2. The sequence is that of Glutamate-1-semialdehyde 2,1-aminomutase from Protochlamydia amoebophila (strain UWE25).